Consider the following 95-residue polypeptide: Aspartyl/glutamyl-tRNA(Asn/Gln) amidotransferase subunit C (95 aa).

The protein belongs to the GatC family. In terms of assembly, heterotrimer of A, B and C subunits.

The catalysed reaction is L-glutamyl-tRNA(Gln) + L-glutamine + ATP + H2O = L-glutaminyl-tRNA(Gln) + L-glutamate + ADP + phosphate + H(+). The enzyme catalyses L-aspartyl-tRNA(Asn) + L-glutamine + ATP + H2O = L-asparaginyl-tRNA(Asn) + L-glutamate + ADP + phosphate + 2 H(+). Allows the formation of correctly charged Asn-tRNA(Asn) or Gln-tRNA(Gln) through the transamidation of misacylated Asp-tRNA(Asn) or Glu-tRNA(Gln) in organisms which lack either or both of asparaginyl-tRNA or glutaminyl-tRNA synthetases. The reaction takes place in the presence of glutamine and ATP through an activated phospho-Asp-tRNA(Asn) or phospho-Glu-tRNA(Gln). The polypeptide is Aspartyl/glutamyl-tRNA(Asn/Gln) amidotransferase subunit C (Clostridium botulinum (strain Loch Maree / Type A3)).